Reading from the N-terminus, the 257-residue chain is Type III pantothenate kinase (257 aa).

Aspartate 11–lysine 18 is a binding site for ATP. Substrate contacts are provided by residues tyrosine 96 and glycine 103–arginine 106. Aspartate 105 (proton acceptor) is an active-site residue. K(+) is bound at residue aspartate 125. An ATP-binding site is contributed by threonine 128. Threonine 179 provides a ligand contact to substrate.

Belongs to the type III pantothenate kinase family. Homodimer. NH4(+) is required as a cofactor. The cofactor is K(+).

The protein localises to the cytoplasm. The catalysed reaction is (R)-pantothenate + ATP = (R)-4'-phosphopantothenate + ADP + H(+). It functions in the pathway cofactor biosynthesis; coenzyme A biosynthesis; CoA from (R)-pantothenate: step 1/5. Its function is as follows. Catalyzes the phosphorylation of pantothenate (Pan), the first step in CoA biosynthesis. The sequence is that of Type III pantothenate kinase from Nitrosomonas eutropha (strain DSM 101675 / C91 / Nm57).